The following is a 466-amino-acid chain: Probable aminotransferase Rv3329 (466 aa).

Lysine 294 carries the N6-(pyridoxal phosphate)lysine modification.

It belongs to the class-III pyridoxal-phosphate-dependent aminotransferase family. Pyridoxal 5'-phosphate serves as cofactor.

Its function is as follows. Probable aminotransferase. In Mycobacterium tuberculosis (strain ATCC 25618 / H37Rv), this protein is Probable aminotransferase Rv3329.